Consider the following 102-residue polypeptide: Small ribosomal subunit protein uS10c (102 aa).

It belongs to the universal ribosomal protein uS10 family. Part of the 30S ribosomal subunit.

Its subcellular location is the plastid. It is found in the chloroplast. In terms of biological role, involved in the binding of tRNA to the ribosomes. The chain is Small ribosomal subunit protein uS10c from Guillardia theta (Cryptophyte).